The following is a 385-amino-acid chain: Period circadian protein (385 aa).

3 disordered regions span residues 28 to 121, 169 to 189, and 322 to 351; these read TAPV…VPPV, GPGP…WEGE, and SPAS…TSQG. Low complexity predominate over residues 71–93; it reads SGNFTTGSNLHMSSVTNTSNAGT. The segment covering 94 to 115 has biased composition (gly residues); sequence GTSGTGNSGDGGGGGAGDGPGS. The segment covering 340-351 has biased composition (polar residues); the sequence is HPSSEQPSTSQG.

As to quaternary structure, forms a heterodimer with timeless (TIM); the complex then translocates into the nucleus. Post-translationally, phosphorylated with a circadian rhythmicity, probably by the double-time protein (dbt). Phosphorylation could be implicated in the stability of per monomer and in the formation of heterodimer per-tim.

It is found in the nucleus. The protein resides in the cytoplasm. It localises to the perinuclear region. Its function is as follows. Essential for biological clock functions. Determines the period length of circadian and ultradian rhythms; an increase in PER dosage leads to shortened circadian rhythms and a decrease leads to lengthened circadian rhythms. Essential for the circadian rhythmicity of locomotor activity, eclosion behavior, and for the rhythmic component of the male courtship song that originates in the thoracic nervous system. The biological cycle depends on the rhythmic formation and nuclear localization of the TIM-PER complex. Light induces the degradation of TIM, which promotes elimination of PER. Nuclear activity of the heterodimer coordinatively regulates PER and TIM transcription through a negative feedback loop. Behaves as a negative element in circadian transcriptional loop. Does not appear to bind DNA, suggesting indirect transcriptional inhibition. The polypeptide is Period circadian protein (per) (Drosophila nebulosa (Fruit fly)).